The chain runs to 180 residues: uncharacterized protein (180 aa).

Coiled-coil stretches lie at residues 3–82 and 95–179; these read LKSL…QKIA and REYE…EKYG.

This is an uncharacterized protein from Aquifex aeolicus (strain VF5).